Here is a 140-residue protein sequence, read N- to C-terminus: RxLR effector protein CRE2 (140 aa).

A signal peptide spans 1–24 (MRWLIWTAVSTLVMLLAMTEVSAS). A RxLR-dEER motif is present at residues 56–72 (RSLRDKSSSLITESEER).

This sequence belongs to the RxLR effector family.

The protein resides in the secreted. Its subcellular location is the host cell. Functionally, effector that is involved in host plant infection. Contributes to virulence during the early infection stage, by inhibiting plant defense responses induced by both PAMP-triggered immunity (PTI) and effector-triggered immunity (ETI). This Phytophthora infestans (strain T30-4) (Potato late blight agent) protein is RxLR effector protein CRE2.